Here is a 641-residue protein sequence, read N- to C-terminus: Macrolide export ATP-binding/permease protein MacB (641 aa).

The ABC transporter domain maps to 2-240; the sequence is IKLENIKKSF…LKQNLKEIKP (239 aa). Residue 38-45 coordinates ATP; the sequence is GQSGSGKS. 4 helical membrane passes run 268 to 288, 516 to 536, 565 to 585, and 601 to 621; these read FLTM…VALA, LLIS…VMNI, FLIE…GLAY, and IFST…GIVF.

This sequence belongs to the ABC transporter superfamily. Macrolide exporter (TC 3.A.1.122) family. Homodimer.

The protein resides in the cell inner membrane. In terms of biological role, non-canonical ABC transporter that contains transmembrane domains (TMD), which form a pore in the inner membrane, and an ATP-binding domain (NBD), which is responsible for energy generation. Confers resistance against macrolides. The polypeptide is Macrolide export ATP-binding/permease protein MacB (Campylobacter fetus subsp. fetus (strain 82-40)).